The sequence spans 257 residues: Phosphate import ATP-binding protein PstB (257 aa).

One can recognise an ABC transporter domain in the interval isoleucine 11–isoleucine 252. Glycine 43–serine 50 lines the ATP pocket.

The protein belongs to the ABC transporter superfamily. Phosphate importer (TC 3.A.1.7) family. As to quaternary structure, the complex is composed of two ATP-binding proteins (PstB), two transmembrane proteins (PstC and PstA) and a solute-binding protein (PstS).

Its subcellular location is the cell inner membrane. The catalysed reaction is phosphate(out) + ATP + H2O = ADP + 2 phosphate(in) + H(+). Its function is as follows. Part of the ABC transporter complex PstSACB involved in phosphate import. Responsible for energy coupling to the transport system. This is Phosphate import ATP-binding protein PstB from Escherichia coli O6:K15:H31 (strain 536 / UPEC).